The sequence spans 352 residues: Photosystem II D2 protein (352 aa).

Residues 40–60 traverse the membrane as a helical segment; sequence CAFLSIGGWLTGTTFVTSWYT. H117 contributes to the chlorophyll a binding site. A helical transmembrane segment spans residues 124–140; the sequence is GFCLRQIEIARLVGIRP. Residues Q129 and N142 each coordinate pheophytin a. The helical transmembrane segment at 152-165 threads the bilayer; it reads VFVSVFLMYPLGQS. Residue H197 coordinates chlorophyll a. Residues 207–227 form a helical membrane-spanning segment; the sequence is GALLCAIHGATVENTLFQDGE. Residues H214 and F261 each coordinate a plastoquinone. H214 contributes to the Fe cation binding site. H268 lines the Fe cation pocket. A helical membrane pass occupies residues 278 to 294; it reads GLWMSSIGIVGLAFNLR.

The protein belongs to the reaction center PufL/M/PsbA/D family. In terms of assembly, PSII is composed of 1 copy each of membrane proteins PsbA, PsbB, PsbC, PsbD, PsbE, PsbF, PsbH, PsbI, PsbJ, PsbK, PsbL, PsbM, PsbT, PsbX, PsbY, PsbZ, Psb30/Ycf12, peripheral proteins PsbO, CyanoQ (PsbQ), PsbU, PsbV and a large number of cofactors. It forms dimeric complexes. The D1/D2 heterodimer binds P680, chlorophylls that are the primary electron donor of PSII, and subsequent electron acceptors. It shares a non-heme iron and each subunit binds pheophytin, quinone, additional chlorophylls, carotenoids and lipids. There is also a Cl(-1) ion associated with D1 and D2, which is required for oxygen evolution. The PSII complex binds additional chlorophylls, carotenoids and specific lipids. serves as cofactor.

It localises to the cellular thylakoid membrane. It carries out the reaction 2 a plastoquinone + 4 hnu + 2 H2O = 2 a plastoquinol + O2. Photosystem II (PSII) is a light-driven water:plastoquinone oxidoreductase that uses light energy to abstract electrons from H(2)O, generating O(2) and a proton gradient subsequently used for ATP formation. It consists of a core antenna complex that captures photons, and an electron transfer chain that converts photonic excitation into a charge separation. The D1/D2 (PsbA/PsbD) reaction center heterodimer binds P680, the primary electron donor of PSII as well as several subsequent electron acceptors. D2 is needed for assembly of a stable PSII complex. The chain is Photosystem II D2 protein from Trichodesmium erythraeum (strain IMS101).